We begin with the raw amino-acid sequence, 97 residues long: Small integral membrane protein 8 (97 aa).

Positions 1–24 (MSSAPEPPTFKKEPPKEKEFQSPG) are disordered. Over residues 9-20 (TFKKEPPKEKEF) the composition is skewed to basic and acidic residues. Residues 48-70 (PVMAFGLVTLSLCVAYIGYLHAI) traverse the membrane as a helical segment.

The protein belongs to the SMIM8 family.

Its subcellular location is the membrane. The protein is Small integral membrane protein 8 (SMIM8) of Homo sapiens (Human).